The following is a 665-amino-acid chain: Succinate dehydrogenase [ubiquinone] flavoprotein subunit A, mitochondrial (665 aa).

Residues 1–45 constitute a mitochondrion transit peptide; it reads MALLKVAPSRLLSRALQLASRVQNCTPTVTTARRNFHFTVYGRKD. Positions 72, 75, 94, 95, and 101 each coordinate FAD. The residue at position 102 (histidine 102) is a Tele-8alpha-FAD histidine. Residues threonine 103, glycine 108, alanine 224, and aspartate 278 each contribute to the FAD site. Residues histidine 299, arginine 343, and histidine 410 each coordinate oxaloacetate. Arginine 343 (proton acceptor) is an active-site residue. FAD is bound at residue glutamate 443. Oxaloacetate is bound by residues arginine 454 and alanine 457. 2 residues coordinate FAD: serine 459 and leucine 460.

It belongs to the FAD-dependent oxidoreductase 2 family. FRD/SDH subfamily. Component of complex II composed of four subunits: a flavoprotein (FP), an iron-sulfur protein (IP), and a cytochrome b composed of a large and a small subunit. Requires FAD as cofactor.

The protein resides in the mitochondrion inner membrane. The catalysed reaction is a ubiquinone + succinate = a ubiquinol + fumarate. It carries out the reaction (R)-malate + a quinone = enol-oxaloacetate + a quinol. The enzyme catalyses (S)-malate + a quinone = enol-oxaloacetate + a quinol. The protein operates within carbohydrate metabolism; tricarboxylic acid cycle; fumarate from succinate (eukaryal route): step 1/1. With respect to regulation, enol-oxaloacetate inhibits the succinate dehydrogenase activity. Its function is as follows. Flavoprotein (FP) subunit of succinate dehydrogenase (SDH) that is involved in complex II of the mitochondrial electron transport chain and is responsible for transferring electrons from succinate to ubiquinone (coenzyme Q). SDH also oxidizes malate to the non-canonical enol form of oxaloacetate, enol-oxaloacetate. Enol-oxaloacetate, which is a potent inhibitor of the succinate dehydrogenase activity, is further isomerized into keto-oxaloacetate. The protein is Succinate dehydrogenase [ubiquinone] flavoprotein subunit A, mitochondrial (sdha-a) of Xenopus laevis (African clawed frog).